The sequence spans 626 residues: MSDTAAAPDKTAKSALAEKLATLPTSPGVYRFSNAAGTVIYVGKARNLRNRVRSYFNSQGRQPGKTAVMVSHIADLNVIITSSEVEALILENNLIKELKPRYNVNLKDDKSYPWLVITNERFPRIFLTRQVRRDGSLYFGPYTEASQLRLILDLIGSIFPVRSCKYKLTEEAVASGRYRVCLDYHIHKCKGPCEGLQSEEEYQAMIREIVTLLKGKTSALLRDLSAEMQKKAKELKFEEAAALKAQIEGLKRYAERQKIVSTEAIDRDVFAVAAGEDDACGVVFRIREGKLIGSRHTYLSNTGNTPLPNLLASFVEHYYLETPDLIPQELMLQAELPEEELEALRQLLSSRQTERRQVRFTVPRIGEKAHLIAMCLDNAKHHLHEFMVQKKLRGEIARKSPALESLKQVLHLGKLPERIECFDNSHFQGTDYVSSMVTFVSGKPKKSDYRKFRLKSFEGSDDYAAMREAVTRRYGGSLAGELPLPDLVLIDGGKGQVNVAWQVLQELGLDLPVAGLAKRLEEIYVPNEPDPYNLPKTSPALKLLQQLRDEAHRFAITYHRKLRSDRTIRTELTGIKGVGEKSAEKLLKHFGSVESVSKASIDELSAVAGRKTAESIYRYFNAGDAP.

The GIY-YIG domain maps to 25–104 (TSPGVYRFSN…IKELKPRYNV (80 aa)). Positions 218–253 (SALLRDLSAEMQKKAKELKFEEAAALKAQIEGLKRY) constitute a UVR domain.

Belongs to the UvrC family. As to quaternary structure, interacts with UvrB in an incision complex.

The protein localises to the cytoplasm. Its function is as follows. The UvrABC repair system catalyzes the recognition and processing of DNA lesions. UvrC both incises the 5' and 3' sides of the lesion. The N-terminal half is responsible for the 3' incision and the C-terminal half is responsible for the 5' incision. The sequence is that of UvrABC system protein C from Chlorobaculum tepidum (strain ATCC 49652 / DSM 12025 / NBRC 103806 / TLS) (Chlorobium tepidum).